A 2511-amino-acid chain; its full sequence is Chromodomain-helicase-DNA-binding protein 8 (2511 aa).

The interval 484-615 (PRVLNQDELP…RSNRQVKRKK (132 aa)) is disordered. Residues 515–524 (GGGVGGGGGG) show a composition bias toward gly residues. Residues 604 to 615 (KRRSNRQVKRKK) show a composition bias toward basic residues. 2 Chromo domains span residues 680–745 (AIVD…AQMR) and 760–826 (VEVD…RTPR). A Helicase ATP-binding domain is found at 859 to 1033 (LFNWYNRQNC…FSLLHFLEPA (175 aa)). 872 to 879 (DEMGLGKT) is an ATP binding site. The DEAH box signature appears at 984 to 987 (DEAH). Residues 1174–1330 (LLDKLLPRLK…SMSGNKESSI (157 aa)) form the Helicase C-terminal domain. 4 disordered regions span residues 1440 to 1482 (TRQF…HSGG), 1715 to 1736 (EQQA…SEDP), 2086 to 2168 (SKNN…LTDP), and 2468 to 2511 (PSAL…SSED). Over residues 1452 to 1461 (DLSDLDSDDD) the composition is skewed to acidic residues. Low complexity predominate over residues 2111-2125 (DSGSSSSSRHSGSSD).

The protein belongs to the SNF2/RAD54 helicase family. CHD8 subfamily. In terms of assembly, component of some MLL1/MLL complex.

It is found in the nucleus. It carries out the reaction ATP + H2O = ADP + phosphate + H(+). Functionally, ATP-dependent chromatin-remodeling factor, it slides nucleosomes along DNA; nucleosome sliding requires ATP. Acts as a transcription repressor by remodeling chromatin structure and recruiting histone H1 to target genes. Suppresses p53/tp53-mediated apoptosis by recruiting histone H1 and preventing p53/tp53 transactivation activity. Acts as a negative regulator of Wnt signaling pathway by regulating beta-catenin (ctnnb1) activity. Negatively regulates ctnnb1-targeted gene expression by being recruited specifically to the promoter regions of several ctnnb1 responsive genes. May also act as a transcription activator by participating in efficient U6 RNA polymerase III transcription. The sequence is that of Chromodomain-helicase-DNA-binding protein 8 from Danio rerio (Zebrafish).